A 146-amino-acid polypeptide reads, in one-letter code: Hemoglobin subunit beta (146 aa).

An N-acetylvaline modification is found at V1. The Globin domain occupies H2–H146. Phosphoserine is present on S44. K59 carries the N6-acetyllysine modification. Residue H63 participates in heme b binding. An N6-acetyllysine modification is found at K82. H92 serves as a coordination point for heme b. S-nitrosocysteine is present on C93. N6-acetyllysine is present on K144.

Belongs to the globin family. Heterotetramer of two alpha chains and two beta chains. In terms of tissue distribution, red blood cells.

Its function is as follows. Involved in oxygen transport from the lung to the various peripheral tissues. In Lyroderma lyra (Greater Asian false-vampire bat), this protein is Hemoglobin subunit beta (HBB).